A 202-amino-acid chain; its full sequence is GTP cyclohydrolase 1 (202 aa).

Cys-90, His-93, and Cys-163 together coordinate Zn(2+).

The protein belongs to the GTP cyclohydrolase I family. In terms of assembly, toroid-shaped homodecamer, composed of two pentamers of five dimers.

The catalysed reaction is GTP + H2O = 7,8-dihydroneopterin 3'-triphosphate + formate + H(+). It functions in the pathway cofactor biosynthesis; 7,8-dihydroneopterin triphosphate biosynthesis; 7,8-dihydroneopterin triphosphate from GTP: step 1/1. This is GTP cyclohydrolase 1 from Mycolicibacterium vanbaalenii (strain DSM 7251 / JCM 13017 / BCRC 16820 / KCTC 9966 / NRRL B-24157 / PYR-1) (Mycobacterium vanbaalenii).